The sequence spans 64 residues: MYVCLCNGISDKKIRQAVRQFSPHSFQQLKKFIPVGNQCGKCVRAAREVMEDELMQLPEFKESA.

[2Fe-2S] cluster is bound by residues Cys4, Cys6, Cys39, and Cys42.

It belongs to the Bfd family. As to quaternary structure, monomer. Interacts with bacterioferritin (BFR); up to 12 Bfd proteins can bind to the BFR. [2Fe-2S] cluster is required as a cofactor.

Its function is as follows. Required for mobilization of iron from the bacterioferritin (BFR) complex. The sequence is that of Bacterioferritin-associated ferredoxin (bfd) from Escherichia coli O6:H1 (strain CFT073 / ATCC 700928 / UPEC).